Consider the following 338-residue polypeptide: MEREENIEIKNSFDYILNSVTGLIESRLLYILVKHKVPEVFEDGLPKTYQQVAEKTQTSPIGIYKLLRYFTTSIGLFEEDLNNLGTFKKTPKSSLFTSDKYATFVEWCNNDLAYNMMKSLDLSIETGEPQCHKSLGVNSWWDLIKKPGEEEFFKNAMKVSSSEAIESALKFIDFSPFKKIVDIGGSHGRFVCEILEKYPNSHGINFDLESFFNGAGELIKNPRLEHKSGNFFESVPEGDCYILKRILHDWKDEDCIKILETIGKSILPGGKVIIFDCIINPKNYNKGHLYLDVMMFHFFGSEEKTIKQFSNISDKAGFKIDKVVNEIPNYCLIISKKD.

Residues glycine 184, aspartate 207, asparagine 230, phenylalanine 231, lysine 244, and arginine 245 each coordinate S-adenosyl-L-methionine. The active-site Proton acceptor is histidine 248.

The protein belongs to the class I-like SAM-binding methyltransferase superfamily. Cation-independent O-methyltransferase family. COMT subfamily.

It carries out the reaction (3,5-dichloro-2,4,6-trihydroxyphenyl)hexan-1-one + S-adenosyl-L-methionine = 1-(3,5-dichloro-2,6-dihydroxy-4-methoxyphenyl)hexan-1-one + S-adenosyl-L-homocysteine + H(+). The polypeptide is O-methyltransferase 4 (omt4) (Dictyostelium discoideum (Social amoeba)).